A 431-amino-acid chain; its full sequence is Translation initiation factor 2 subunit gamma (431 aa).

The 198-residue stretch at 26-223 (QPCVNIGMVG…ALETQIPTPS (198 aa)) folds into the tr-type G domain. Residues 35 to 42 (GHVDHGKT) form a G1 region. 4 residues coordinate Mg(2+): aspartate 38, threonine 42, glycine 63, and serine 65. 38 to 43 (DHGKTT) is a binding site for GTP. The interval 63–67 (GISIR) is G2. Residues cysteine 78, cysteine 81, cysteine 93, and cysteine 96 each contribute to the Zn(2+) site. A G3 region spans residues 110–113 (DAPG). GTP-binding positions include 166 to 169 (NKID) and 201 to 203 (SAQ). The segment at 166 to 169 (NKID) is G4. Residues 201 to 203 (SAQ) are G5.

This sequence belongs to the TRAFAC class translation factor GTPase superfamily. Classic translation factor GTPase family. EIF2G subfamily. In terms of assembly, heterotrimer composed of an alpha, a beta and a gamma chain. Requires Mg(2+) as cofactor.

It catalyses the reaction GTP + H2O = GDP + phosphate + H(+). Its function is as follows. eIF-2 functions in the early steps of protein synthesis by forming a ternary complex with GTP and initiator tRNA. This is Translation initiation factor 2 subunit gamma from Methanosarcina mazei (strain ATCC BAA-159 / DSM 3647 / Goe1 / Go1 / JCM 11833 / OCM 88) (Methanosarcina frisia).